The chain runs to 293 residues: MSKAQKRKRLNKYDGESKTPANKSTVDGGNPYPTLLRPTAEECRDVRDALLSLHGFPPEFANYRRQRLRSFSAVDDHDTQCNLKSETLNETEEESVLDGLVKILLSQNTTESNSQRAFASLKATFPKWDDVLNAESKSIENAIRCGGLAPKKAVCIKNILNRLQNERGRLCLEYLRGLSVEEVKTELSHFKGVGPKTVSCVLMFNLQHNDFPVDTHVFEIAKALGWVPKTADRNKTYVHLNRKIPDELKFDLNCLLYTHGKICSNCKKNVAKPKAKVASPDDCPLVGFYDLIV.

Over residues 1–10 (MSKAQKRKRL) the composition is skewed to basic residues. Residues 1–34 (MSKAQKRKRLNKYDGESKTPANKSTVDGGNPYPT) are disordered. The DNA site is built by Asn108 and Lys151. Lys196 (schiff-base intermediate with DNA) is an active-site residue. Residues His216 and Asp232 each contribute to the DNA site.

This sequence belongs to the DNA glycosylase family.

This is Putative DNA glycosylase At3g47830 from Arabidopsis thaliana (Mouse-ear cress).